Reading from the N-terminus, the 455-residue chain is UDP-glycosyltransferase 2 (455 aa).

The protein belongs to the UDP-glycosyltransferase family.

The catalysed reaction is exophillate + UDP-alpha-D-galactose = phaeomoniecin D + UDP + H(+). It functions in the pathway secondary metabolite biosynthesis. Functionally, catalyzes the second glycosylation step during phaeomoniecin D biosynthesis, the further O-galactosylation of exophillic acid (produced by the O-glycosyltransferase OGT1) to yield the 4-O-beta-D-galactoside phaeomoniecin D. The protein is UDP-glycosyltransferase 2 of Phaeomoniella chlamydospora (Phaeoacremonium chlamydosporum).